A 348-amino-acid chain; its full sequence is MTNDPAEISSRKRRHIDVCLNDEVNYVGVTTGLERYRLPFNALTQTSLADIDLSAEFFGAPLRAPVLIGAMTGGAELSATINRNLATAAQRLGIGMMLGSQRIMLDDARGQRAASSFAVREVAPDVLLIGNIGLAQLTKAAVPAVAAALRRVGANALAVHANSLQEAMQHGGDTDFSGSLGRLRDAADLLDYPVLLKEVGHGIGAAAVAQLLRLPGGLPVSGIDVAGAGGTSWSRVEQLVRYGELRYPELADWGIPTAEAIVEVRQALPAVPLVASGGIRTGMDAAKAIALGADVVAIARPLLAPAIESATAVQGWLQLFLDELRVCLHCCGARDLTSLRDIGVTAIR.

11 to 12 (RK) contributes to the substrate binding site. Residues 70-72 (AMT), S100, and N131 contribute to the FMN site. 100 to 102 (SQR) is a binding site for substrate. Q165 contacts substrate. E166 is a binding site for Mg(2+). FMN is bound by residues K197, T231, 278–280 (GIR), and 299–300 (AR).

Belongs to the IPP isomerase type 2 family. In terms of assembly, homooctamer. Dimer of tetramers. The cofactor is FMN. Requires NADPH as cofactor. Mg(2+) is required as a cofactor.

It is found in the cytoplasm. The catalysed reaction is isopentenyl diphosphate = dimethylallyl diphosphate. Functionally, involved in the biosynthesis of isoprenoids. Catalyzes the 1,3-allylic rearrangement of the homoallylic substrate isopentenyl (IPP) to its allylic isomer, dimethylallyl diphosphate (DMAPP). This chain is Isopentenyl-diphosphate delta-isomerase, found in Mycobacterium marinum (strain ATCC BAA-535 / M).